Reading from the N-terminus, the 281-residue chain is Complement C1q tumor necrosis factor-related protein 1 (281 aa).

Residues 1 to 25 form the signal peptide; that stretch reads MGSCAQGFMLGCCLLLAITWGPILS. The interval 35–68 is disordered; that stretch reads QEWEETEELPSPLDPVTRPEETREKYSPRQGEDL. The segment covering 51-66 has biased composition (basic and acidic residues); that stretch reads TRPEETREKYSPRQGE. The N-linked (GlcNAc...) asparagine glycan is linked to asparagine 93. Residues 99 to 140 enclose the Collagen-like domain; the sequence is GEKGDRGDRGLQGKYGKIGSTGPRGHVGPKGQKGSIGAPGNH. Positions 107-136 are disordered; that stretch reads RGLQGKYGKIGSTGPRGHVGPKGQKGSIGA. The C1q domain maps to 141–281; it reads CKSQYAAFSV…GYLVKPASEP (141 aa).

The protein resides in the secreted. The sequence is that of Complement C1q tumor necrosis factor-related protein 1 (C1qtnf1) from Mus musculus (Mouse).